The sequence spans 339 residues: tRNA (cytidine(56)-2'-O)-methyltransferase (339 aa).

S-adenosyl-L-methionine-binding positions include L79 and 105–109 (GSEKV). The region spanning 188-295 (LIEHVKAVEG…VAQADNLFAG (108 aa)) is the HD domain.

It belongs to the aTrm56 family. Homodimer.

Its subcellular location is the cytoplasm. It catalyses the reaction cytidine(56) in tRNA + S-adenosyl-L-methionine = 2'-O-methylcytidine(56) in tRNA + S-adenosyl-L-homocysteine + H(+). Specifically catalyzes the AdoMet-dependent 2'-O-ribose methylation of cytidine at position 56 in tRNAs. This is tRNA (cytidine(56)-2'-O)-methyltransferase from Thermoplasma acidophilum (strain ATCC 25905 / DSM 1728 / JCM 9062 / NBRC 15155 / AMRC-C165).